Consider the following 443-residue polypeptide: Probable nitrate/nitrite antiporter NarK2 (443 aa).

Helical transmembrane passes span 32 to 52 (ITTFNLTLSFITWYVVSALVV), 66 to 86 (LFWLTAMPGLAGGTLRIIWTF), 95 to 115 (HLVTFSTLLLLIPLLGWGFAV), 123 to 143 (WVLLLLAFLAGIGGGHFSGYM), 172 to 192 (IVQFVTPWIIGFALFGSLLGG), 210 to 230 (NATFAWVPFVLLGALLAWVYL), 256 to 276 (SLYIMTFGSFSGFSAIFPLLI), 292 to 312 (YAFLGPLVGSLARVIAGPISD), 314 to 334 (LGGAIVTQVSAIGIFLSALLV), 346 to 366 (FPMFVVAMLLIFFFSGVGNAS), 383 to 403 (VIGWTAAVAAYGPFLFSTLAA), and 409 to 429 (TGGFTAFFYGLMVFYAFNFFL).

Belongs to the major facilitator superfamily. Nitrate/nitrite porter (TC 2.A.1.8) family.

The protein resides in the cell membrane. It carries out the reaction nitrate(in) + nitrite(out) = nitrate(out) + nitrite(in). Functionally, probable nitrate/nitrite antiporter that may be involved in nitrate import and nitrite export during anaerobic growth. The polypeptide is Probable nitrate/nitrite antiporter NarK2 (Thermus thermophilus).